The chain runs to 406 residues: Elongation factor Tu (406 aa).

Residues 10-215 enclose the tr-type G domain; the sequence is KPHVNVGTIG…AIDEYIPTPV (206 aa). The G1 stretch occupies residues 19–26; that stretch reads GHVDHGKT. 19–26 contributes to the GTP binding site; that stretch reads GHVDHGKT. Thr26 contributes to the Mg(2+) binding site. A G2 region spans residues 61 to 65; sequence GITIN. The tract at residues 82–85 is G3; it reads DCPG. GTP is bound by residues 82 to 86 and 137 to 140; these read DCPGH and NKVD. The segment at 137 to 140 is G4; sequence NKVD. Positions 175-177 are G5; that stretch reads SAL.

Belongs to the TRAFAC class translation factor GTPase superfamily. Classic translation factor GTPase family. EF-Tu/EF-1A subfamily. In terms of assembly, monomer.

The protein localises to the cytoplasm. The enzyme catalyses GTP + H2O = GDP + phosphate + H(+). GTP hydrolase that promotes the GTP-dependent binding of aminoacyl-tRNA to the A-site of ribosomes during protein biosynthesis. This Thermus thermophilus (strain ATCC BAA-163 / DSM 7039 / HB27) protein is Elongation factor Tu.